A 196-amino-acid chain; its full sequence is GTP cyclohydrolase-2 (196 aa).

49–53 lines the GTP pocket; the sequence is RVHSE. Residues Cys54, Cys65, and Cys67 each coordinate Zn(2+). Residues Gln70, 92–94, and Thr114 contribute to the GTP site; that span reads EGR. Asp126 serves as the catalytic Proton acceptor. Residue Arg128 is the Nucleophile of the active site. GTP contacts are provided by Thr149 and Lys154.

It belongs to the GTP cyclohydrolase II family. In terms of assembly, homodimer. Zn(2+) serves as cofactor.

It catalyses the reaction GTP + 4 H2O = 2,5-diamino-6-hydroxy-4-(5-phosphoribosylamino)-pyrimidine + formate + 2 phosphate + 3 H(+). It participates in cofactor biosynthesis; riboflavin biosynthesis; 5-amino-6-(D-ribitylamino)uracil from GTP: step 1/4. Functionally, catalyzes the conversion of GTP to 2,5-diamino-6-ribosylamino-4(3H)-pyrimidinone 5'-phosphate (DARP), formate and pyrophosphate. The polypeptide is GTP cyclohydrolase-2 (Shigella dysenteriae serotype 1 (strain Sd197)).